The primary structure comprises 97 residues: Class II hydrophobin 1 (97 aa).

A signal peptide spans 1–16 (MKFFAIAALFAAAAVA). A propeptide spanning residues 17 to 22 (QPLEDR) is cleaved from the precursor. Disulfide bonds link Cys30-Cys79, Cys40-Cys70, Cys41-Cys53, and Cys80-Cys91.

This sequence belongs to the cerato-ulmin hydrophobin family. In terms of assembly, homotetramer. Further self-assembles to form highly ordered films at water-air interfaces through intermolecular interactions.

It localises to the secreted. Its subcellular location is the cell wall. Its function is as follows. Aerial growth, conidiation, and dispersal of filamentous fungi in the environment rely upon a capability of their secreting small amphipathic proteins called hydrophobins (HPBs) with low sequence identity. Class I can self-assemble into an outermost layer of rodlet bundles on aerial cell surfaces, conferring cellular hydrophobicity that supports fungal growth, development and dispersal; whereas Class II form highly ordered films at water-air interfaces through intermolecular interactions but contribute nothing to the rodlet structure. Hbf1 is a class II hydrophobin that has a role in hyphal development and is in particular required for the formation of aerial hyphae. The chain is Class II hydrophobin 1 from Hypocrea jecorina (Trichoderma reesei).